The primary structure comprises 407 residues: Peptide chain release factor subunit 1 (407 aa).

The protein belongs to the eukaryotic release factor 1 family. As to quaternary structure, heterodimer of two subunits, one of which binds GTP.

Its subcellular location is the cytoplasm. Directs the termination of nascent peptide synthesis (translation) in response to the termination codons UAA, UAG and UGA. In Archaeoglobus fulgidus (strain ATCC 49558 / DSM 4304 / JCM 9628 / NBRC 100126 / VC-16), this protein is Peptide chain release factor subunit 1 (prf1).